Here is an 855-residue protein sequence, read N- to C-terminus: Suppressor of tumorigenicity 14 protein (855 aa).

Residues 1–20 (MGSDRARKGGGGPKDFGAGL) form a disordered region. The Cytoplasmic portion of the chain corresponds to 1–55 (MGSDRARKGGGGPKDFGAGLKYNSRHEKVNGLEEGVEFLPVNNVKKVEKHGPGRW). Residues 56–76 (VVLAAVLIGLLLVLLGIGFLV) form a helical; Signal-anchor for type II membrane protein membrane-spanning segment. Residues 77 to 855 (WHLQYRDVRV…RDWIKENTGV (779 aa)) lie on the Extracellular side of the membrane. The SEA domain maps to 86–203 (VQKVFNGYMR…TSVVAFPTDS (118 aa)). Asn109 is a glycosylation site (N-linked (GlcNAc...) asparagine). Cys214 and Cys244 form a disulfide bridge. CUB domains are found at residues 214-334 (CSFG…FFQL) and 340-447 (CGGR…YLSY). An N-linked (GlcNAc...) asparagine glycan is attached at Asn302. 15 disulfide bridges follow: Cys340/Cys366, Cys397/Cys410, Cys453/Cys464, Cys459/Cys477, Cys471/Cys486, Cys488/Cys501, Cys496/Cys514, Cys508/Cys523, Cys525/Cys537, Cys532/Cys550, Cys544/Cys559, Cys567/Cys579, Cys574/Cys593, Cys587/Cys602, and Cys641/Cys657. 4 consecutive LDL-receptor class A domains span residues 452-487 (PCPG…LNCS), 487-524 (SCDA…QGCS), 524-560 (SCPA…ASCP), and 566-603 (TCTK…KDCD). Asn485 is a glycosylation site (N-linked (GlcNAc...) asparagine). The 240-residue stretch at 615-854 (VVGGTDADEG…FRDWIKENTG (240 aa)) folds into the Peptidase S1 domain. Active-site charge relay system residues include His656 and Asp711. An N-linked (GlcNAc...) asparagine glycan is attached at Asn772. Cystine bridges form between Cys776–Cys790 and Cys801–Cys830. Catalysis depends on Ser805, which acts as the Charge relay system.

The protein belongs to the peptidase S1 family. In terms of assembly, interacts with CDCP1. May interact with TMEFF1. Interacts with iripin-3, a serine protease inhibitor from Ixodes ricinus saliva. Interacts with iripin-1, a serine protease inhibitor from Ixodes ricinus saliva.

It is found in the membrane. It carries out the reaction Cleaves various synthetic substrates with Arg or Lys at the P1 position and prefers small side-chain amino acids, such as Ala and Gly, at the P2 position.. Exhibits trypsin-like activity as defined by cleavage of synthetic substrates with Arg or Lys as the P1 site. Involved in the terminal differentiation of keratinocytes through prostasin (PRSS8) activation and filaggrin (FLG) processing. Proteolytically cleaves and therefore activates TMPRSS13. The protein is Suppressor of tumorigenicity 14 protein (ST14) of Homo sapiens (Human).